The sequence spans 286 residues: Putative cyclin-H (286 aa).

Residues 79–148 (AIIYIKRFYL…ILESLNFNLI (70 aa)) enclose the Cyclin N-terminal domain. The disordered stretch occupies residues 235–286 (NNNNNNNNNNNNNNNNNNNNNNNNNNNNNNNNNNNNNNNNNNNNNNNNNLLL).

This sequence belongs to the cyclin family. Cyclin C subfamily.

It localises to the nucleus. Functionally, may regulate cdk7 involved in transcription regulation and cell cycle progression. This chain is Putative cyclin-H (cycH), found in Dictyostelium discoideum (Social amoeba).